We begin with the raw amino-acid sequence, 239 residues long: Ubiquinone biosynthesis O-methyltransferase (239 aa).

Residues R44, G63, D84, and M128 each contribute to the S-adenosyl-L-methionine site.

The protein belongs to the methyltransferase superfamily. UbiG/COQ3 family.

The enzyme catalyses a 3-demethylubiquinol + S-adenosyl-L-methionine = a ubiquinol + S-adenosyl-L-homocysteine + H(+). The catalysed reaction is a 3-(all-trans-polyprenyl)benzene-1,2-diol + S-adenosyl-L-methionine = a 2-methoxy-6-(all-trans-polyprenyl)phenol + S-adenosyl-L-homocysteine + H(+). It functions in the pathway cofactor biosynthesis; ubiquinone biosynthesis. In terms of biological role, O-methyltransferase that catalyzes the 2 O-methylation steps in the ubiquinone biosynthetic pathway. The sequence is that of Ubiquinone biosynthesis O-methyltransferase from Xanthomonas axonopodis pv. citri (strain 306).